We begin with the raw amino-acid sequence, 215 residues long: Urease accessory protein UreG (215 aa).

Residues 1–21 form a disordered region; it reads MNAPAPSSARRTKKLPPLRVG. Residue 24-31 coordinates GTP; sequence GPVGSGKT.

This sequence belongs to the SIMIBI class G3E GTPase family. UreG subfamily. As to quaternary structure, homodimer. UreD, UreF and UreG form a complex that acts as a GTP-hydrolysis-dependent molecular chaperone, activating the urease apoprotein by helping to assemble the nickel containing metallocenter of UreC. The UreE protein probably delivers the nickel.

It is found in the cytoplasm. Functionally, facilitates the functional incorporation of the urease nickel metallocenter. This process requires GTP hydrolysis, probably effectuated by UreG. This is Urease accessory protein UreG from Burkholderia lata (strain ATCC 17760 / DSM 23089 / LMG 22485 / NCIMB 9086 / R18194 / 383).